Consider the following 565-residue polypeptide: Adenine deaminase (565 aa).

Belongs to the metallo-dependent hydrolases superfamily. Adenine deaminase family. Mn(2+) is required as a cofactor.

It carries out the reaction adenine + H2O + H(+) = hypoxanthine + NH4(+). The protein is Adenine deaminase of Cereibacter sphaeroides (strain ATCC 17025 / ATH 2.4.3) (Rhodobacter sphaeroides).